Consider the following 358-residue polypeptide: Myb family transcription factor APL (358 aa).

Residues threonine 31 to glutamine 91 form the HTH myb-type domain. The H-T-H motif DNA-binding region spans proline 62–arginine 87. A coiled-coil region spans residues arginine 125 to glutamine 145. The LHEQLE signature appears at leucine 138 to glutamate 143. Positions arginine 313–glycine 358 are disordered.

The protein belongs to the MYB-CC family. As to expression, expressed in shoots and roots, specifically in the developing protophloem sieve elements. Detected in phloem and/or cambium. Expressed in the phloem tissues of various organs, including leaves and cotyledons, during vegetative growth.

The protein localises to the nucleus. In terms of biological role, transcription factor required for phloem identity. Has a dual role both in promoting phloem differentiation and in repressing xylem differentiation during vascular development. Regulates the expression of the transcription factor NAC045 (AC A4VCM0). May activate the transcription of specific genes involved in phosphate uptake or assimilation. Promotes flowering through transcriptional activation of both FT and its transport machinery component, FTIP1. This Arabidopsis thaliana (Mouse-ear cress) protein is Myb family transcription factor APL.